The primary structure comprises 118 residues: DNA-binding protein inhibitor ID-3-A (118 aa).

In terms of domain architecture, bHLH spans 32–84 (SHKGPGMDEPMGLLYDMNGCYSKLKELVPGIPQGSKLSQVEILQHVIDYIFDL).

As to quaternary structure, homodimer. Heterodimer with other HLH proteins. Interacts (via HLH domain) with the bHLH protein hes4/hairy2 (via Orange domain). Interacts with stat3. As to expression, at gastrula stage, expressed in all three germ layers, but becomes localized to discrete domains of the developing nervous system during neurulation, including the anterior neural plate, cement gland, eye anlagen, otic placode and both cranial and trunk premigratory and early migratory neural crest cells. Also expressed in the most dorsal and ventral portions of the myotome, the developing heart and anterior blood islets, and in the tail fin mesenchyme. Expressed at a low level in limbs, with expression decreasing as limbs develop, but expressed at a high level in blastemas (regenerated limbs), where expression is localized to both the blastermal epidermis and mesenchyme. Widely expressed in adults including the liver and heart.

The protein resides in the nucleus. Functionally, transcriptional regulator (lacking a basic DNA binding domain) which negatively regulates the basic helix-loop-helix (bHLH) transcription factors by forming heterodimers and inhibiting their DNA binding and transcriptional activity. Influences cell fate decisions in the embryo by sequestering and blocking the activity of the bHLH transcription factors that control these decisions. Inhibits the binding of myogenic bHLH-containing complexes to E-box DNA, thereby preventing activation of muscle-specific target genes. Also inhibits the activity of neurogenic factor neurod1/neuroD. Plays a role in cell cycle progression and survival of neural crest progenitors; binding to either hes4-B/hairy2b or stat3 blocks the formation of transcription factor complexes and the repressor function of hes4-B/hairy2B, to allow neural crest progenitors to differentiate. May play a role in the regulation of the circadian rhythm. The protein is DNA-binding protein inhibitor ID-3-A (id3-a) of Xenopus laevis (African clawed frog).